The chain runs to 326 residues: Adenosine receptor A1 (326 aa).

The Extracellular portion of the chain corresponds to 1 to 10 (MPPAISAFQA). Residues 11-33 (AYIGIEVLIALVSVPGNVLVIWA) traverse the membrane as a helical segment. Topologically, residues 34 to 46 (VKVNQALRDATFC) are cytoplasmic. A helical membrane pass occupies residues 47 to 69 (FIVSLAVADVAVGALVIPLAILI). Residues 70-80 (NIGPRTYFHTC) are Extracellular-facing. The cysteines at positions 80 and 169 are disulfide-linked. Residues 81–102 (LMVACPVLILTQSSILALLAIA) traverse the membrane as a helical segment. Over 103-123 (VDRYLRVKIPLRYKTVVTPRR) the chain is Cytoplasmic. A helical membrane pass occupies residues 124 to 146 (AAVAIAGCWILSFVVGLTPLFGW). Over 147-176 (NRLGEAQRAWAANGSGGEPVIKCEFEKVIS) the chain is Extracellular. Residue Asn159 is glycosylated (N-linked (GlcNAc...) asparagine). A helical membrane pass occupies residues 177-201 (MEYMVYFNFFVWVLPPLLLMVLIYL). Residues 202-235 (EVFYLIRRQLGKKVSASSGDPQKYYGKELKIAKS) lie on the Cytoplasmic side of the membrane. Residues 236–259 (LALILFLFALSWLPLHILNCITLF) traverse the membrane as a helical segment. Over 260–267 (CPSCRKPS) the chain is Extracellular. A helical membrane pass occupies residues 268–292 (ILMYIAIFLTHGNSAMNPIVYAFRI). At 293–326 (QKFRVTFLKIWNDHFRCQPTPPVDEDPPEEAPHD) the chain is on the cytoplasmic side. Cys309 is lipidated: S-palmitoyl cysteine.

The protein belongs to the G-protein coupled receptor 1 family.

Its subcellular location is the cell membrane. Its function is as follows. Receptor for adenosine. The activity of this receptor is mediated by G proteins which inhibit adenylyl cyclase. In Canis lupus familiaris (Dog), this protein is Adenosine receptor A1 (ADORA1).